A 79-amino-acid polypeptide reads, in one-letter code: RNA-binding protein Hfq (79 aa).

In terms of domain architecture, Sm spans 10-69 (GPFLNALRKEHVPVSIYLVNGIKLQGNIESFDQYVVLLRNTVTQMVYKHAISTVVPARAV).

The protein belongs to the Hfq family. In terms of assembly, homohexamer.

Functionally, RNA chaperone that binds small regulatory RNA (sRNAs) and mRNAs to facilitate mRNA translational regulation in response to envelope stress, environmental stress and changes in metabolite concentrations. Also binds with high specificity to tRNAs. This is RNA-binding protein Hfq from Cupriavidus necator (strain ATCC 17699 / DSM 428 / KCTC 22496 / NCIMB 10442 / H16 / Stanier 337) (Ralstonia eutropha).